The sequence spans 471 residues: Methylenetetrahydrofolate--tRNA-(uracil-5-)-methyltransferase TrmFO (471 aa).

Residue 9 to 14 (GGGLSG) coordinates FAD.

The protein belongs to the MnmG family. TrmFO subfamily. Requires FAD as cofactor.

The protein resides in the cytoplasm. It catalyses the reaction uridine(54) in tRNA + (6R)-5,10-methylene-5,6,7,8-tetrahydrofolate + NADH + H(+) = 5-methyluridine(54) in tRNA + (6S)-5,6,7,8-tetrahydrofolate + NAD(+). The catalysed reaction is uridine(54) in tRNA + (6R)-5,10-methylene-5,6,7,8-tetrahydrofolate + NADPH + H(+) = 5-methyluridine(54) in tRNA + (6S)-5,6,7,8-tetrahydrofolate + NADP(+). Its function is as follows. Catalyzes the folate-dependent formation of 5-methyl-uridine at position 54 (M-5-U54) in all tRNAs. This is Methylenetetrahydrofolate--tRNA-(uracil-5-)-methyltransferase TrmFO from Beijerinckia indica subsp. indica (strain ATCC 9039 / DSM 1715 / NCIMB 8712).